A 179-amino-acid polypeptide reads, in one-letter code: Transcription factor BOA15 (179 aa).

It localises to the nucleus. In terms of biological role, transcription factor that probably coregulates the gene clusters that mediates the biosynthesis of botcinin acid and its botcinin derivatives, acetate-derived polyketides that contribute to virulence when combined with the sesquiterpene botrydial. Botcinin acid and its derivatives have been shown to induce chlorosis and necrosis during host plant infection, but also have antifungal activities. The chain is Transcription factor BOA15 from Botryotinia fuckeliana (strain B05.10) (Noble rot fungus).